We begin with the raw amino-acid sequence, 362 residues long: Porin Omp2b (362 aa).

A signal peptide spans 1–22 (MNIKSLLLGSAAALVAASGAQA).

The protein belongs to the alphaproteobacteria porin family. Homotrimer.

It is found in the cell outer membrane. Forms passive diffusion pores that allow small molecular weight hydrophilic materials across the outer membrane. This chain is Porin Omp2b (omp2b), found in Brucella canis (strain ATCC 23365 / NCTC 10854 / RM-666).